We begin with the raw amino-acid sequence, 1291 residues long: Cytoplasmic FMR1-interacting protein (1291 aa).

Residues 1269-1291 (HPSVISSSSHYQDPQKLRQSMNN) form a disordered region. The span at 1271-1291 (SVISSSSHYQDPQKLRQSMNN) shows a compositional bias: polar residues.

It belongs to the CYFIP family. In terms of assembly, interacts with Fmr1 and Rac1. Component of the WAVE complex composed of Hem/Kette, Scar/Wave and Cyfip where it binds through its C-terminus directly to Hem.

The protein localises to the cytoplasm. Its function is as follows. Plays a role in guidance and morphology of central and peripheral axons and in synaptic morphology. Also required for formation of cell membrane protrusions and for bristle development. This Drosophila pseudoobscura pseudoobscura (Fruit fly) protein is Cytoplasmic FMR1-interacting protein.